A 312-amino-acid polypeptide reads, in one-letter code: Methionyl-tRNA formyltransferase (312 aa).

Residue 109–112 (SLLP) participates in (6S)-5,6,7,8-tetrahydrofolate binding.

The protein belongs to the Fmt family.

The catalysed reaction is L-methionyl-tRNA(fMet) + (6R)-10-formyltetrahydrofolate = N-formyl-L-methionyl-tRNA(fMet) + (6S)-5,6,7,8-tetrahydrofolate + H(+). Attaches a formyl group to the free amino group of methionyl-tRNA(fMet). The formyl group appears to play a dual role in the initiator identity of N-formylmethionyl-tRNA by promoting its recognition by IF2 and preventing the misappropriation of this tRNA by the elongation apparatus. This chain is Methionyl-tRNA formyltransferase, found in Ruminiclostridium cellulolyticum (strain ATCC 35319 / DSM 5812 / JCM 6584 / H10) (Clostridium cellulolyticum).